Consider the following 123-residue polypeptide: Putative iron-sulfur cluster insertion protein ErpA (123 aa).

3 residues coordinate iron-sulfur cluster: C51, C115, and C117.

Belongs to the HesB/IscA family. As to quaternary structure, homodimer. It depends on iron-sulfur cluster as a cofactor.

Its function is as follows. Required for insertion of 4Fe-4S clusters. The polypeptide is Putative iron-sulfur cluster insertion protein ErpA (Burkholderia lata (strain ATCC 17760 / DSM 23089 / LMG 22485 / NCIMB 9086 / R18194 / 383)).